Here is a 391-residue protein sequence, read N- to C-terminus: Testis-expressed protein 9 (391 aa).

Disordered stretches follow at residues 1 to 31 (MAGR…PGPD) and 65 to 85 (QEVR…EDDY). A coiled-coil region spans residues 188–351 (IGTEAQIRFL…EKQKGELMIG (164 aa)).

The protein localises to the cytoplasm. It is found in the cytoskeleton. Its subcellular location is the microtubule organizing center. It localises to the centrosome. The protein resides in the centriolar satellite. This chain is Testis-expressed protein 9 (TEX9), found in Homo sapiens (Human).